The sequence spans 58 residues: Histatherin (58 aa).

A signal peptide spans 1–19 (MKIFIFIFIMALILAMIRA).

It belongs to the histatin/statherin family. In terms of tissue distribution, expressed in mammary glands.

Its subcellular location is the secreted. This is Histatherin from Bos taurus (Bovine).